A 267-amino-acid chain; its full sequence is DNA repair protein RecO (267 aa).

The protein belongs to the RecO family.

In terms of biological role, involved in DNA repair and RecF pathway recombination. This is DNA repair protein RecO from Mesoplasma florum (strain ATCC 33453 / NBRC 100688 / NCTC 11704 / L1) (Acholeplasma florum).